A 247-amino-acid polypeptide reads, in one-letter code: uncharacterized protein (247 aa).

A run of 2 helical transmembrane segments spans residues 11 to 31 and 39 to 59; these read LIAPPLNTFVLLIIAAIIYCV and FIAIISFTWLYIMSAPFTGLL.

The protein localises to the cell membrane. This is an uncharacterized protein from Haemophilus influenzae (strain ATCC 51907 / DSM 11121 / KW20 / Rd).